Consider the following 645-residue polypeptide: Glucans biosynthesis glucosyltransferase H (645 aa).

Positions 1–28 (MDGTVTLSPAPTDLPPVSSLDAGQPTLP) are disordered. Transmembrane regions (helical) follow at residues 64–84 (LIGG…SVLW), 98–118 (LFVL…AGFI), 423–443 (APMW…GAGI), 465–485 (AIWI…LGYI), 504–524 (ALSI…VMYL), 558–578 (SYGG…LVSP), and 580–600 (LAAW…VVAV).

The protein belongs to the glycosyltransferase 2 family. OpgH subfamily.

It localises to the cell inner membrane. The protein operates within glycan metabolism; osmoregulated periplasmic glucan (OPG) biosynthesis. In terms of biological role, involved in the biosynthesis of osmoregulated periplasmic glucans (OPGs). In Xanthomonas campestris pv. campestris (strain B100), this protein is Glucans biosynthesis glucosyltransferase H.